Consider the following 621-residue polypeptide: Exonuclease 3'-5' domain-containing protein 2 (621 aa).

The Mitochondrial intermembrane portion of the chain corresponds to 1-4 (MSRQ). A helical membrane pass occupies residues 5–25 (NLVALTVTTLLGVAVGGFVLW). Over 26–621 (KGIQRRRRSK…FGEDLPIQLS (596 aa)) the chain is Cytoplasmic. The tract at residues 34–68 (SKTSPVTQQPQQKVLGSRELPPPEDDQLHSSAPRS) is disordered. Over residues 36–47 (TSPVTQQPQQKV) the composition is skewed to polar residues. Residues D108, E110, and D246 each coordinate a divalent metal cation. In terms of domain architecture, 3'-5' exonuclease spans 155–247 (ILADGTILKV…DQVIYAARDA (93 aa)). Residues 299–343 (RLGEEVNGEATESQQKPRNKKSKMDGMVPGNHQGRDPRKHKRKPL) form a disordered region.

The protein belongs to the EXD2 family. Homodimer. Interacts with RBBP8, MRE11 and BRCA1. Mg(2+) serves as cofactor. Mn(2+) is required as a cofactor.

The protein resides in the mitochondrion outer membrane. It is found in the mitochondrion matrix. Its subcellular location is the nucleus. It localises to the chromosome. It carries out the reaction Exonucleolytic cleavage in the 3'- to 5'-direction to yield nucleoside 5'-phosphates.. Functionally, exonuclease that has both 3'-5' exoribonuclease and exodeoxyribonuclease activities, depending on the divalent metal cation used as cofactor. In presence of Mg(2+), only shows 3'-5' exoribonuclease activity, while it shows both exoribonuclease and exodeoxyribonuclease activities in presence of Mn(2+). Acts as an exoribonuclease in mitochondrion, possibly by regulating ATP production and mitochondrial translation. Also involved in the response to DNA damage. Acts as 3'-5' exodeoxyribonuclease for double-strand breaks resection and efficient homologous recombination. Plays a key role in controlling the initial steps of chromosomal break repair, it is recruited to chromatin in a damage-dependent manner and functionally interacts with the MRN complex to accelerate resection through its 3'-5' exonuclease activity, which efficiently processes double-stranded DNA substrates containing nicks. Also involved in response to replicative stress: recruited to stalled forks and is required to stabilize and restart stalled replication forks by restraining excessive fork regression, thereby suppressing their degradation. This is Exonuclease 3'-5' domain-containing protein 2 from Homo sapiens (Human).